Here is a 79-residue protein sequence, read N- to C-terminus: Large ribosomal subunit protein uL24 (79 aa).

It belongs to the universal ribosomal protein uL24 family. In terms of assembly, part of the 50S ribosomal subunit.

Functionally, one of two assembly initiator proteins, it binds directly to the 5'-end of the 23S rRNA, where it nucleates assembly of the 50S subunit. One of the proteins that surrounds the polypeptide exit tunnel on the outside of the subunit. In Lactobacillus johnsonii (strain CNCM I-12250 / La1 / NCC 533), this protein is Large ribosomal subunit protein uL24.